Here is a 372-residue protein sequence, read N- to C-terminus: Flap endonuclease 1 (372 aa).

The segment at 1-105 (MGVKGLNQLI…GELEKRLLRR (105 aa)) is N-domain. Residue aspartate 34 participates in Mg(2+) binding. The DNA site is built by arginine 47 and arginine 71. Mg(2+) is bound by residues aspartate 87, glutamate 159, glutamate 161, aspartate 180, and aspartate 182. The tract at residues 123 to 254 (EVLKFEKRLV…ATAFKLIKEH (132 aa)) is I-domain. Position 159 (glutamate 159) interacts with DNA. DNA is bound by residues glycine 232 and aspartate 234. Residue aspartate 234 participates in Mg(2+) binding. The segment at 339 to 347 (VQGRLDGFF) is interaction with PCNA.

This sequence belongs to the XPG/RAD2 endonuclease family. FEN1 subfamily. Interacts with PCNA. Three molecules of RAD27 bind to one PCNA trimer with each molecule binding to one PCNA monomer. PCNA stimulates the nuclease activity without altering cleavage specificity. It depends on Mg(2+) as a cofactor. In terms of processing, phosphorylated. Phosphorylation upon DNA damage induces relocalization to the nuclear plasma.

The protein resides in the nucleus. The protein localises to the nucleolus. Its subcellular location is the nucleoplasm. It is found in the mitochondrion. Functionally, structure-specific nuclease with 5'-flap endonuclease and 5'-3' exonuclease activities involved in DNA replication and repair. During DNA replication, cleaves the 5'-overhanging flap structure that is generated by displacement synthesis when DNA polymerase encounters the 5'-end of a downstream Okazaki fragment. It enters the flap from the 5'-end and then tracks to cleave the flap base, leaving a nick for ligation. Also involved in the long patch base excision repair (LP-BER) pathway, by cleaving within the apurinic/apyrimidinic (AP) site-terminated flap. Acts as a genome stabilization factor that prevents flaps from equilibrating into structures that lead to duplications and deletions. Also possesses 5'-3' exonuclease activity on nicked or gapped double-stranded DNA, and exhibits RNase H activity. Also involved in replication and repair of rDNA and in repairing mitochondrial DNA. This chain is Flap endonuclease 1, found in Candida dubliniensis (strain CD36 / ATCC MYA-646 / CBS 7987 / NCPF 3949 / NRRL Y-17841) (Yeast).